We begin with the raw amino-acid sequence, 147 residues long: Cytochrome c-type biogenesis protein CcmE (147 aa).

At 1–7 (MKPRHKR) the chain is on the cytoplasmic side. Residues 8–28 (AAIIAGGLAALGIAAYLVLNA) form a helical; Signal-anchor for type II membrane protein membrane-spanning segment. Topologically, residues 29–147 (FQSNLVFFFS…QIQKTIKSLK (119 aa)) are periplasmic. Residues H121 and Y125 each coordinate heme.

The protein belongs to the CcmE/CycJ family.

It localises to the cell inner membrane. Heme chaperone required for the biogenesis of c-type cytochromes. Transiently binds heme delivered by CcmC and transfers the heme to apo-cytochromes in a process facilitated by CcmF and CcmH. The polypeptide is Cytochrome c-type biogenesis protein CcmE (Albidiferax ferrireducens (strain ATCC BAA-621 / DSM 15236 / T118) (Rhodoferax ferrireducens)).